A 561-amino-acid chain; its full sequence is Mesoderm induction early response protein 2 (561 aa).

Disordered stretches follow at residues 1-28 (MAEA…GEPN) and 52-188 (QNYG…EDPL). The residue at position 11 (S11) is a Phosphoserine. Polar residues predominate over residues 140-165 (QSSADDLTPSVTSHEASDLFPSQSGS). Residues 195–292 (KEIMVGPQFQ…EALRRLRFNV (98 aa)) form the ELM2 domain. An SANT domain is found at 297–349 (DGLCAWSEEERRNFEHGFRVHGKNFHLIQANKVRTRSVGECVEYYYLWKKSER). Positions 360–515 (GRRKYGPSGN…DGEPEETVGP (156 aa)) are disordered. Residues 417–428 (LSMGSSMSRSLG) show a composition bias toward low complexity. The span at 439–451 (SSEPGPRLFPPLD) shows a compositional bias: pro residues. Low complexity predominate over residues 453 to 482 (PSALPSSRRPPALAEPAFFPPATAAPEPGA).

As to quaternary structure, part of a complex containing at least CDYL, MIER1, MIER2, HDAC1 and HDAC2.

The protein localises to the nucleus. Functionally, transcriptional repressor. This is Mesoderm induction early response protein 2 (MIER2) from Bos taurus (Bovine).